Reading from the N-terminus, the 1233-residue chain is Rho guanine nucleotide exchange factor 10-like protein (1233 aa).

The segment covering 1–10 (MASSNPPPQP) has biased composition (pro residues). A disordered region spans residues 1–93 (MASSNPPPQP…GTGVPAWVSN (93 aa)). A compositionally biased stretch (acidic residues) spans 26–46 (EAEDDPGEAFEFDDSDDEEDT). Ser-40 bears the Phosphoserine mark. The span at 72–89 (PVTDPDPAAAPPGTGVPA) shows a compositional bias: low complexity. 2 positions are modified to phosphotyrosine: Tyr-131 and Tyr-152. The tract at residues 159 to 193 (GAPRQAEDLGWSSSEFESYSEDSGEEAKPEVEPAK) is disordered. A compositionally biased stretch (basic and acidic residues) spans 183 to 193 (EEAKPEVEPAK). Ser-240 carries the post-translational modification Phosphoserine. The 188-residue stretch at 275–462 (VRRHILGSIV…ETLAEKLNEQ (188 aa)) folds into the DH domain. A compositionally biased stretch (basic and acidic residues) spans 1089–1104 (QEEAEGPRAEEEKPDG). Disordered stretches follow at residues 1089–1117 (QEEA…HVGR) and 1140–1161 (PLLS…SEED).

In terms of assembly, interacts with RHOA, RHOB and RHOC.

The protein resides in the cytoplasm. Functionally, acts as a guanine nucleotide exchange factor (GEF) for RHOA, RHOB and RHOC. The chain is Rho guanine nucleotide exchange factor 10-like protein (ARHGEF10L) from Pongo abelii (Sumatran orangutan).